The sequence spans 458 residues: tRNA modification GTPase MnmE (458 aa).

Residues Arg-22, Glu-84, and Arg-123 each contribute to the (6S)-5-formyl-5,6,7,8-tetrahydrofolate site. Positions 220–379 (GIATAIIGRP…LEKAIADLFF (160 aa)) constitute a TrmE-type G domain. Residue Asn-230 participates in K(+) binding. GTP is bound by residues 230–235 (NVGKSS), 249–255 (TDIAGTT), and 274–277 (DTAG). Position 234 (Ser-234) interacts with Mg(2+). K(+) is bound by residues Thr-249, Ile-251, and Thr-254. Thr-255 provides a ligand contact to Mg(2+). Lys-458 lines the (6S)-5-formyl-5,6,7,8-tetrahydrofolate pocket.

Belongs to the TRAFAC class TrmE-Era-EngA-EngB-Septin-like GTPase superfamily. TrmE GTPase family. In terms of assembly, homodimer. Heterotetramer of two MnmE and two MnmG subunits. Requires K(+) as cofactor.

The protein localises to the cytoplasm. Exhibits a very high intrinsic GTPase hydrolysis rate. Involved in the addition of a carboxymethylaminomethyl (cmnm) group at the wobble position (U34) of certain tRNAs, forming tRNA-cmnm(5)s(2)U34. In Bacillus cereus (strain ZK / E33L), this protein is tRNA modification GTPase MnmE.